Reading from the N-terminus, the 120-residue chain is UPF0231 protein YacL (120 aa).

This sequence belongs to the UPF0231 family.

The protein is UPF0231 protein YacL of Salmonella heidelberg (strain SL476).